Reading from the N-terminus, the 519-residue chain is Cytosol aminopeptidase (519 aa).

Serine 42 carries the post-translational modification Phosphoserine. Residue lysine 45 is modified to N6-succinyllysine. The residue at position 54 (serine 54) is a Phosphoserine. N6-succinyllysine occurs at positions 61 and 103. Phosphoserine is present on residues serine 180 and serine 194. Zn(2+)-binding residues include leucine 202, methionine 203, and threonine 205. Serine 238 carries the post-translational modification Phosphoserine. The Zn(2+) site is built by lysine 282 and aspartate 287. Substrate contacts are provided by lysine 282, aspartate 287, serine 292, and lysine 294. Position 287 (aspartate 287) interacts with Mg(2+). Residue lysine 294 is part of the active site. Residues arginine 303, aspartate 305, aspartate 364, and glutamate 366 each contribute to the Zn(2+) site. Positions 305 and 364 each coordinate substrate. Aspartate 364 and glutamate 366 together coordinate Mg(2+). Arginine 368 is a catalytic residue. Position 455 is an N6-acetyllysine; alternate (lysine 455). At lysine 455 the chain carries N6-succinyllysine; alternate. N6-succinyllysine is present on lysine 476. Residue lysine 489 is modified to N6-acetyllysine; alternate. Lysine 489 is modified (N6-succinyllysine; alternate).

It belongs to the peptidase M17 family. In terms of assembly, homohexamer. It depends on Zn(2+) as a cofactor. Mn(2+) is required as a cofactor.

Its subcellular location is the cytoplasm. It catalyses the reaction Release of an N-terminal amino acid, Xaa-|-Yaa-, in which Xaa is preferably Leu, but may be other amino acids including Pro although not Arg or Lys, and Yaa may be Pro. Amino acid amides and methyl esters are also readily hydrolyzed, but rates on arylamides are exceedingly low.. The enzyme catalyses an S-substituted L-cysteinylglycine + H2O = an S-substituted L-cysteine + glycine. It carries out the reaction L-cysteinylglycine + H2O = L-cysteine + glycine. The catalysed reaction is S-benzyl-L-cysteinylglycine + H2O = S-benzyl-L-cysteine + glycine. It catalyses the reaction Release of N-terminal proline from a peptide.. Its activity is regulated as follows. Zofenoprilat inhibits Cys-Gly hydrolysis activity. Cytosolic metallopeptidase that catalyzes the removal of unsubstituted N-terminal hydrophobic amino acids from various peptides. The presence of Zn(2+) ions is essential for the peptidase activity, and the association with other cofactors can modulate the substrate spectificity of the enzyme. For instance, in the presence of Mn(2+), it displays a specific Cys-Gly hydrolyzing activity of Cys-Gly-S-conjugates. Involved in the metabolism of glutathione and in the degradation of glutathione S-conjugates, which may play a role in the control of the cell redox status. The polypeptide is Cytosol aminopeptidase (Bos taurus (Bovine)).